The primary structure comprises 296 residues: F-box only protein 2 (296 aa).

The interval 1-41 (MDGDGDPESVGQPEEASPEEQPEEASAEEERPEDQQEEEAA) is disordered. The span at 16–40 (ASPEEQPEEASAEEERPEDQQEEEA) shows a compositional bias: acidic residues. An F-box domain is found at 44-91 (AAYLDELPEPLLLRVLAALPAAELVQACRLVCLRWKELVDGAPLWLLK). The 184-residue stretch at 113 to 296 (FYFLSKRRRN…VTNSSVWVEP (184 aa)) folds into the FBA domain. Residues 210–212 (RSD) and 278–279 (YW) each bind a carbohydrate.

Component of the SCF(FBXO2) complex consisting of CUL1, RBX1, SKP1 and FBXO2. Predominantly detected as heterodimer with SKP1; the heterodimer with SKP1 is not part of the SCF(FBXO2) complex.

It localises to the cytoplasm. The protein resides in the microsome membrane. Its pathway is protein modification; protein ubiquitination. Functionally, substrate recognition component of a SCF (SKP1-CUL1-F-box protein) E3 ubiquitin-protein ligase complex that mediates the ubiquitination and subsequent proteasomal degradation of target proteins. Involved in the endoplasmic reticulum-associated degradation pathway (ERAD) for misfolded lumenal proteins by recognizing and binding sugar chains on unfolded glycoproteins that are retrotranslocated into the cytosol and promoting their ubiquitination and subsequent degradation. Prevents formation of cytosolic aggregates of unfolded glycoproteins that have been retrotranslocated into the cytosol. Able to recognize and bind denatured glycoproteins, preferentially those of the high-mannose type. The chain is F-box only protein 2 (FBXO2) from Homo sapiens (Human).